We begin with the raw amino-acid sequence, 299 residues long: GTPase Era (299 aa).

Positions 5 to 175 (RSGFVCFVGR…TDVLAGKLPP (171 aa)) constitute an Era-type G domain. The tract at residues 13–20 (GRPNTGKS) is G1. 13 to 20 (GRPNTGKS) is a GTP binding site. The G2 stretch occupies residues 39–43 (QTTRH). Residues 60–63 (DTPG) form a G3 region. Residues 60–64 (DTPGL) and 124–127 (TKID) contribute to the GTP site. The segment at 124–127 (TKID) is G4. The G5 stretch occupies residues 154–156 (VSA). The region spanning 206-285 (VRDELPHSLA…YLDLRVKIAK (80 aa)) is the KH type-2 domain.

The protein belongs to the TRAFAC class TrmE-Era-EngA-EngB-Septin-like GTPase superfamily. Era GTPase family. As to quaternary structure, monomer.

The protein resides in the cell envelope. It is found in the secreted. The protein localises to the cell wall. Its function is as follows. Exhibits GTPase activity. Binds RNA but is probably not involved in ribosome assembly in mycobacteria. This Mycobacterium sp. (strain KMS) protein is GTPase Era.